A 69-amino-acid chain; its full sequence is Conotoxin Eb6.20 (69 aa).

The signal sequence occupies residues 1–17 (VLIIAVLFLTACQLTTA). The propeptide occupies 18 to 41 (ETYSRGRQKHRARRSTDKNSKWTR). 3 disulfides stabilise this stretch: Cys43–Cys57, Cys50–Cys61, and Cys56–Cys68.

The protein belongs to the conotoxin O1 superfamily. Expressed by the venom duct.

The protein localises to the secreted. The chain is Conotoxin Eb6.20 (E1) from Conus ebraeus (Hebrew cone).